A 733-amino-acid polypeptide reads, in one-letter code: Ribosomal protein S6 kinase alpha-2 (733 aa).

The Protein kinase 1 domain maps to 59-318 (FELLKVLGQG…VEEIKRHPFF (260 aa)). Residues 65 to 73 (LGQGSYGKV) and K91 each bind ATP. Catalysis depends on D184, which acts as the Proton acceptor. Position 218 is a phosphoserine; by PDPK1 (S218). The region spanning 319 to 388 (VTIDWNTLYR…VASSLIQEPS (70 aa)) is the AGC-kinase C-terminal domain. S377 carries the post-translational modification Phosphoserine. A Protein kinase 2 domain is found at 415–672 (YEIKEDIGVG…AMQVLKHPWV (258 aa)). ATP is bound by residues 421 to 429 (IGVGSYSVC) and K444. The active-site Proton acceptor is the D532.

Belongs to the protein kinase superfamily. AGC Ser/Thr protein kinase family. S6 kinase subfamily. Forms a complex with either MAPK1/ERK2 or MAPK3/ERK1 in quiescent cells. Transiently dissociates following mitogenic stimulation. Interacts with FBXO5; cooperate to induce the metaphase arrest of early blastomeres; increases and stabilizes interaction of FBXO5 with CDC20. It depends on Mg(2+) as a cofactor. Post-translationally, activated by phosphorylation at Ser-218 by PDPK1. Autophosphorylated on Ser-377, as part of the activation process. May be phosphorylated at Thr-356 and Ser-360 by MAPK1/ERK2 and MAPK3/ERK1. In terms of processing, N-terminal myristoylation results in an activated kinase in the absence of added growth factors. As to expression, widely expressed with higher expression in lung, skeletal muscle, brain, uterus, ovary, thyroid and prostate.

The protein resides in the nucleus. It is found in the cytoplasm. It carries out the reaction L-seryl-[protein] + ATP = O-phospho-L-seryl-[protein] + ADP + H(+). The enzyme catalyses L-threonyl-[protein] + ATP = O-phospho-L-threonyl-[protein] + ADP + H(+). Its activity is regulated as follows. Upon extracellular signal or mitogen stimulation, phosphorylated at Thr-570 in the C-terminal kinase domain (CTKD) by MAPK1/ERK2 and MAPK3/ERK1. The activated CTKD then autophosphorylates Ser-377, allowing binding of PDPK1, which in turn phosphorylates Ser-218 in the N-terminal kinase domain (NTDK) leading to the full activation of the protein and subsequent phosphorylation of the substrates by the NTKD. Functionally, serine/threonine-protein kinase that acts downstream of ERK (MAPK1/ERK2 and MAPK3/ERK1) signaling and mediates mitogenic and stress-induced activation of transcription factors, regulates translation, and mediates cellular proliferation, survival, and differentiation. May function as tumor suppressor in epithelial ovarian cancer cells. The sequence is that of Ribosomal protein S6 kinase alpha-2 (RPS6KA2) from Homo sapiens (Human).